Reading from the N-terminus, the 456-residue chain is UPF0210 protein Dde_3704 (456 aa).

The protein belongs to the UPF0210 family. As to quaternary structure, homodimer.

The polypeptide is UPF0210 protein Dde_3704 (Oleidesulfovibrio alaskensis (strain ATCC BAA-1058 / DSM 17464 / G20) (Desulfovibrio alaskensis)).